The sequence spans 128 residues: Glycophorin-C (128 aa).

Residues 1–12 (MWSTRSPNSTAW) show a composition bias toward polar residues. Residues 1 to 48 (MWSTRSPNSTAWPLSLEPDPGMASASTTMHTTTIAEPDPGMSGWPDGR) form a disordered region. Residues 1–57 (MWSTRSPNSTAWPLSLEPDPGMASASTTMHTTTIAEPDPGMSGWPDGRMETSTPTIM) lie on the Extracellular side of the membrane. The O-linked (GalNAc...) serine glycan is linked to serine 3. Threonine 4 carries O-linked (GalNAc...) threonine glycosylation. Serine 6 carries O-linked (GalNAc...) serine glycosylation. Asparagine 8 carries N-linked (GlcNAc...) asparagine glycosylation. An O-linked (GalNAc...) serine glycan is attached at serine 9. The O-linked (GalNAc...) threonine glycan is linked to threonine 10. Serine 15, serine 24, and serine 26 each carry an O-linked (GalNAc...) serine glycan. Positions 22 to 33 (MASASTTMHTTT) are enriched in low complexity. 5 O-linked (GalNAc...) threonine glycosylation sites follow: threonine 27, threonine 28, threonine 31, threonine 32, and threonine 33. The O-linked (GalNAc...) serine glycan is linked to serine 42. A helical; Signal-anchor for type III membrane protein membrane pass occupies residues 58 to 81 (DIVVIAGVIAAVAIVLVSLLFVML). The Cytoplasmic segment spans residues 82–128 (RYMYRHKGTYHTNEAKGTEFAESADAALQGDPALQDAGDSSRKEYFI). Phosphoserine occurs at positions 104 and 122. Residues 108-128 (ALQGDPALQDAGDSSRKEYFI) form a disordered region.

Belongs to the glycophorin-C family. Post-translationally, O-glycosylated with core 1 or possibly core 8 glycans. As to expression, glycophorin-C is expressed in erythrocytes. Glycophorin-D and IsoGPC are ubiquitously expressed.

The protein resides in the cell membrane. Its function is as follows. This protein is a minor sialoglycoprotein in human erythrocyte membranes. The blood group Gerbich antigens and receptors for Plasmodium falciparum merozoites are most likely located within the extracellular domain. Glycophorin-C plays an important role in regulating the stability of red cells. The chain is Glycophorin-C (GYPC) from Homo sapiens (Human).